We begin with the raw amino-acid sequence, 472 residues long: Sarcalumenin (472 aa).

Positions 1–20 (MKRLNLLCCCVASLLLLGTA) are cleaved as a signal peptide. Leu59 is a glycosylation site (N-linked (GlcNAc...) asparagine). Residues 89-330 (ITSKPMVLFL…IENRMENKIA (242 aa)) enclose the Dynamin-type G domain. The tract at residues 99-106 (GPWSVGKS) is G1 motif. The G2 motif stretch occupies residues 127–128 (EP). The interval 189 to 192 (DTPG) is G3 motif. Positions 254–257 (NKAD) are G4 motif. Residue Leu278 is a region of interest, G5 motif. N-linked (GlcNAc...) asparagine glycans are attached at residues Asn280 and Asn388.

It belongs to the TRAFAC class dynamin-like GTPase superfamily. Dynamin/Fzo/YdjA family. In terms of processing, N-glycosylated.

It localises to the sarcoplasmic reticulum lumen. Its subcellular location is the sarcoplasmic reticulum membrane. The sequence is that of Sarcalumenin (SRL) from Gallus gallus (Chicken).